We begin with the raw amino-acid sequence, 298 residues long: Isochorismatase domain-containing protein 1 (298 aa).

Position 160 is a phosphotyrosine (Tyr-160). N6-succinyllysine is present on Lys-279.

The protein belongs to the isochorismatase family.

This Homo sapiens (Human) protein is Isochorismatase domain-containing protein 1 (ISOC1).